We begin with the raw amino-acid sequence, 129 residues long: Small ribosomal subunit protein uS9 (129 aa).

It belongs to the universal ribosomal protein uS9 family.

The protein is Small ribosomal subunit protein uS9 of Wolinella succinogenes (strain ATCC 29543 / DSM 1740 / CCUG 13145 / JCM 31913 / LMG 7466 / NCTC 11488 / FDC 602W) (Vibrio succinogenes).